The primary structure comprises 217 residues: Small ribosomal subunit protein uS3c (217 aa).

Residues 47–119 enclose the KH type-2 domain; that stretch reads VRTHIKSSSN…KLHIAIEKVA (73 aa).

Belongs to the universal ribosomal protein uS3 family. Part of the 30S ribosomal subunit.

The protein resides in the plastid. The protein localises to the chloroplast. The chain is Small ribosomal subunit protein uS3c (rps3) from Pinus thunbergii (Japanese black pine).